The sequence spans 181 residues: Probable N-acetyltransferase YjcK (181 aa).

In terms of domain architecture, N-acetyltransferase spans 7–172 (IYVRPLEVTD…NGVWEDHQVL (166 aa)).

This sequence belongs to the acetyltransferase family. RimJ subfamily.

The enzyme catalyses an N-terminal L-alpha-aminoacyl-[protein] + acetyl-CoA = N-terminal N(alpha)-acetyl-L-alpha-aminoacyl-[protein] + CoA + H(+). Its function is as follows. Probable N-terminal protein acetyltransferase. The protein is Probable N-acetyltransferase YjcK (yjcK) of Bacillus subtilis (strain 168).